Here is a 541-residue protein sequence, read N- to C-terminus: MKSYTPYFILLWSAVGIAKAAKIIIVPPIMFESHMYIFKTLASALHERGHHTVFLLSEGRDIAPSNHYSLQRYPGIFNSTTSDAFLQSKMRNIFSGRLTAIELFDILDHYTKNCDLMVGNHALIQGLKKEKFDLLLVDPNDMCGFVIAHLLGVKYAVFSTGLWYPAEVGAPAPLAYVPEFNSLLTDRMNLLQRMKNTGVYLISRLGVSFLVLPKYERIMQKYNLLPEKSMYDLVHGSSLWMLCTDVALEFPRPTLPNVVYVGGILTKPASPLPEDLQRWVNGANEHGFVLVSFGAGVKYLSEDIANKLAGALGRLPQKVIWRFSGPKPKNLGNNTKLIEWLPQNDLLGHSKIKAFLSHGGLNSIFETIYHGVPVVGIPLFGDHYDTMTRVQAKGMGILLEWKTVTEKELYEALVKVINNPSYRQRAQKLSEIHKDQPGHPVNRTIYWIDYIIRHNGAHHLRAAVHQISFCQYFLLDIAFVLLLGAALLYFLLSWVTKFIYRKIKSLWSRNKHSTVNGHYHNGILNGKYKRNGHIKHEKKVK.

An N-terminal signal peptide occupies residues 1-20 (MKSYTPYFILLWSAVGIAKA). Residues asparagine 78, asparagine 333, and asparagine 442 are each glycosylated (N-linked (GlcNAc...) asparagine). The helical transmembrane segment at 472 to 492 (YFLLDIAFVLLLGAALLYFLL) threads the bilayer.

It belongs to the UDP-glycosyltransferase family.

The protein localises to the membrane. The protein resides in the endoplasmic reticulum. The catalysed reaction is an N-acylsphing-4-enine + UDP-alpha-D-galactose = a beta-D-galactosyl-(1&lt;-&gt;1')-N-acylsphing-4-enine + UDP + H(+). It catalyses the reaction an N-acyl-sphingoid base + UDP-alpha-D-galactose = a D-galactosylceramide + UDP + H(+). The enzyme catalyses N-(2-hydroxy-hexanoyl)-sphing-4-enine + UDP-alpha-D-galactose = N-(2-hydroxy-hexanoyl)-beta-D-galactosyl-sphing-4-enine + UDP + H(+). It carries out the reaction N-(2-hydroxy-hexanoyl)-sphinganine + UDP-alpha-D-galactose = N-(2-hydroxyhexanoyl)-beta-D-galactosylsphinganine + UDP + H(+). It participates in sphingolipid metabolism; galactosylceramide biosynthesis. Catalyzes the transfer of galactose to ceramide, a key enzymatic step in the biosynthesis of galactocerebrosides, which are abundant sphingolipids of the myelin membrane of the central nervous system and peripheral nervous system. Galactosylates both hydroxy- and non-hydroxy fatty acid-containing ceramides and diglycerides. The chain is 2-hydroxyacylsphingosine 1-beta-galactosyltransferase from Homo sapiens (Human).